We begin with the raw amino-acid sequence, 853 residues long: Eukaryotic translation initiation factor 3 subunit C (853 aa).

Residues 1–78 are disordered; the sequence is MSRFFAASDS…EDEDQNKVLK (78 aa). Positions 11–46 are enriched in acidic residues; that stretch reads SSEESSEEELYSDNEASAQEDSDKDSDDDDSDDDDS. The PCI domain occupies 599–773; sequence FHMHINLELL…SAIIFRKGVE (175 aa). Residues 798-853 are disordered; the sequence is TLEQRTQGTANAFERQGGRGGRGGGRGRGGGRGGGVPRGGRNQQFTGGALGRAIQA. Residues 815–835 are compositionally biased toward gly residues; it reads GRGGRGGGRGRGGGRGGGVPR.

The protein belongs to the eIF-3 subunit C family. In terms of assembly, component of the eukaryotic translation initiation factor 3 (eIF-3) complex.

The protein resides in the cytoplasm. Functionally, component of the eukaryotic translation initiation factor 3 (eIF-3) complex, which is involved in protein synthesis of a specialized repertoire of mRNAs and, together with other initiation factors, stimulates binding of mRNA and methionyl-tRNAi to the 40S ribosome. The eIF-3 complex specifically targets and initiates translation of a subset of mRNAs involved in cell proliferation. The protein is Eukaryotic translation initiation factor 3 subunit C of Phaeosphaeria nodorum (strain SN15 / ATCC MYA-4574 / FGSC 10173) (Glume blotch fungus).